The chain runs to 425 residues: 5-methylthioadenosine/S-adenosylhomocysteine deaminase (425 aa).

H63 and H65 together coordinate Zn(2+). 2 residues coordinate substrate: E92 and H184. Residue H211 participates in Zn(2+) binding. Residues E214 and D299 each coordinate substrate. D299 is a Zn(2+) binding site.

The protein belongs to the metallo-dependent hydrolases superfamily. MTA/SAH deaminase family. Zn(2+) serves as cofactor.

It catalyses the reaction S-adenosyl-L-homocysteine + H2O + H(+) = S-inosyl-L-homocysteine + NH4(+). It carries out the reaction S-methyl-5'-thioadenosine + H2O + H(+) = S-methyl-5'-thioinosine + NH4(+). Catalyzes the deamination of 5-methylthioadenosine and S-adenosyl-L-homocysteine into 5-methylthioinosine and S-inosyl-L-homocysteine, respectively. Is also able to deaminate adenosine. The protein is 5-methylthioadenosine/S-adenosylhomocysteine deaminase of Pyrococcus abyssi (strain GE5 / Orsay).